A 557-amino-acid chain; its full sequence is MSNPRHNEREVRSPRGDELNAKSWLTEAPLRMLMNNLDPDVAERPHELVVYGGIGRAARTWDDFDKIVATLKTLNEDETLLVQSGKPVGVFRTHKDAPRVLIANSNLVPHWATWDHFNELDKKGLAMYGQMTAGSWIYIGAQGIVQGTYETFVEAGRQHYDGNLKGKWILTGGLGGMGGAQPLAAVMAGACCLAVECDETRADFRLRTRYVDEKTHSLDEALAKIDEWTKAGEAKSIALIGNAAEIYPELVKRGVRPDIVTDQTSAHDPVHGYLPIGWTVAEWRAKQESDPKGVAKAARASMKVQVQAMLDFWNAGIPTVDYGNNIRQMALEEGLENAFDFPGFVPAYIRPLFCRGVGPFRWAALSGDPEDIAKTDAKVKELLPDNKHLHNWLDMAKERIEFQGLPARICWVGLGDRHRLGLAFNEMVRNGELKAPIVIGRDHLDSGSVASPNRETEAMKDGSDAVSDWPLLNALLNTASGATWVSLHHGGGVGMGFSQHSGMVICCDGTEDADQRIGRVLWNDPATGVMRHADAGYDIALDWAKQQGLRLPAILGN.

The tract at residues 1 to 20 (MSNPRHNEREVRSPRGDELN) is disordered. NAD(+) is bound by residues 52–53 (GG), Gln-130, 176–178 (GMG), Glu-196, Arg-201, 242–243 (NA), 263–267 (QTSAH), 273–274 (YL), and Tyr-322. Cys-410 is an active-site residue. Position 492 (Gly-492) interacts with NAD(+).

Belongs to the urocanase family. The cofactor is NAD(+).

It localises to the cytoplasm. It catalyses the reaction 4-imidazolone-5-propanoate = trans-urocanate + H2O. Its pathway is amino-acid degradation; L-histidine degradation into L-glutamate; N-formimidoyl-L-glutamate from L-histidine: step 2/3. Its function is as follows. Catalyzes the conversion of urocanate to 4-imidazolone-5-propionate. This is Urocanate hydratase from Brucella anthropi (strain ATCC 49188 / DSM 6882 / CCUG 24695 / JCM 21032 / LMG 3331 / NBRC 15819 / NCTC 12168 / Alc 37) (Ochrobactrum anthropi).